The primary structure comprises 554 residues: Glutamine--tRNA ligase (554 aa).

Residues 34 to 44 (PEPNGYLHIGH) carry the 'HIGH' region motif. Residues 35–37 (EPN) and 41–47 (HIGHAKS) contribute to the ATP site. Residues Asp-67 and Tyr-212 each contribute to the L-glutamine site. Residues Thr-231, 261-262 (RL), and 269-271 (MSK) contribute to the ATP site. The 'KMSKS' region signature appears at 268-272 (VMSKR). The tract at residues 317-324 (TKQDNTIE) is interaction with tRNA.

It belongs to the class-I aminoacyl-tRNA synthetase family. Monomer.

It localises to the cytoplasm. The catalysed reaction is tRNA(Gln) + L-glutamine + ATP = L-glutaminyl-tRNA(Gln) + AMP + diphosphate. This is Glutamine--tRNA ligase from Escherichia coli O127:H6 (strain E2348/69 / EPEC).